The following is a 110-amino-acid chain: Integration host factor subunit alpha (110 aa).

This sequence belongs to the bacterial histone-like protein family. Heterodimer of an alpha and a beta chain.

Its function is as follows. This protein is one of the two subunits of integration host factor, a specific DNA-binding protein that functions in genetic recombination as well as in transcriptional and translational control. This is Integration host factor subunit alpha from Delftia acidovorans (strain DSM 14801 / SPH-1).